Consider the following 97-residue polypeptide: Large ribosomal subunit protein bL31B (97 aa).

This sequence belongs to the bacterial ribosomal protein bL31 family. Type B subfamily. As to quaternary structure, part of the 50S ribosomal subunit.

This chain is Large ribosomal subunit protein bL31B (rpmE2), found in Mycolicibacterium paratuberculosis (strain ATCC BAA-968 / K-10) (Mycobacterium paratuberculosis).